Here is a 297-residue protein sequence, read N- to C-terminus: Phosphoribosylaminoimidazole-succinocarboxamide synthase (297 aa).

It belongs to the SAICAR synthetase family.

The enzyme catalyses 5-amino-1-(5-phospho-D-ribosyl)imidazole-4-carboxylate + L-aspartate + ATP = (2S)-2-[5-amino-1-(5-phospho-beta-D-ribosyl)imidazole-4-carboxamido]succinate + ADP + phosphate + 2 H(+). The protein operates within purine metabolism; IMP biosynthesis via de novo pathway; 5-amino-1-(5-phospho-D-ribosyl)imidazole-4-carboxamide from 5-amino-1-(5-phospho-D-ribosyl)imidazole-4-carboxylate: step 1/2. This is Phosphoribosylaminoimidazole-succinocarboxamide synthase from Corynebacterium glutamicum (strain ATCC 13032 / DSM 20300 / JCM 1318 / BCRC 11384 / CCUG 27702 / LMG 3730 / NBRC 12168 / NCIMB 10025 / NRRL B-2784 / 534).